A 357-amino-acid chain; its full sequence is Phenylalanine--tRNA ligase alpha subunit (357 aa).

Residue E278 coordinates Mg(2+).

The protein belongs to the class-II aminoacyl-tRNA synthetase family. Phe-tRNA synthetase alpha subunit type 1 subfamily. Tetramer of two alpha and two beta subunits. It depends on Mg(2+) as a cofactor.

The protein resides in the cytoplasm. It carries out the reaction tRNA(Phe) + L-phenylalanine + ATP = L-phenylalanyl-tRNA(Phe) + AMP + diphosphate + H(+). In Albidiferax ferrireducens (strain ATCC BAA-621 / DSM 15236 / T118) (Rhodoferax ferrireducens), this protein is Phenylalanine--tRNA ligase alpha subunit.